The following is a 343-amino-acid chain: Leucine-rich repeat-containing protein 23 (343 aa).

The span at 1–30 (MSDEDDLEDSEPDQDDSEKEEDEKETEEGE) shows a compositional bias: acidic residues. Residues 1-47 (MSDEDDLEDSEPDQDDSEKEEDEKETEEGEDYRKEGEEFPEEWLPTP) form a disordered region. 8 LRR repeats span residues 92-113 (HLRY…NYLT), 114-134 (HLLW…NELP), 135-155 (YLQI…ISHP), 156-177 (RLET…DPEK), 180-200 (SLHT…INLP), 201-222 (KLKN…EDLS), 223-244 (NLTT…SREM), and 246-267 (SLQY…AKLR). The interaction with RSPH9 stretch occupies residues 208–343 (AQNMLKKVEG…RDLEPEQSLI (136 aa)). One can recognise an LRRCT domain in the interval 280 to 318 (NPCTDETSYRQEALVQMPYLERLDKEFYEEEERAEADVI). Positions 307–329 (YEEEERAEADVIRQRLKEEKEQE) form a coiled coil. The span at 318-337 (IRQRLKEEKEQEPEPQRDLE) shows a compositional bias: basic and acidic residues. The interval 318 to 343 (IRQRLKEEKEQEPEPQRDLEPEQSLI) is disordered.

Component of the axonemal radial spoke complex. Interacts with RSPH3. Interacts with RSPH9. In terms of tissue distribution, expressed in spermatozoa.

It is found in the cell projection. The protein localises to the cilium. The protein resides in the flagellum. It localises to the cytoplasm. Its subcellular location is the cytoskeleton. It is found in the flagellum axoneme. Its function is as follows. Essential for sperm motility and male fertility. Plays an important role in the proper assembly of the third radial spoke (RS3) head and the bridge structure between RS2 and RS3 in the sperm flagella. The polypeptide is Leucine-rich repeat-containing protein 23 (LRRC23) (Homo sapiens (Human)).